We begin with the raw amino-acid sequence, 421 residues long: MRTLKLIILLILSTFKTINSTNIKISECGKARCVPNGESSTDGGQCGLPLPGVIGTAALNVFAFDKGSRCGECYELTGPLGSTVVMITDGCDAGDACQQKELFNFIISKKDFNKIGNSSAYGNIYSLGYQKVSCGFSGYIKAVFGGGSIAGRPDYSYYFHVSFSNFNIGIKQVQLMGTGMSRISTLKRDLGKYTWNQEGGGAKLQFPATLILTGIDGQTLSYKFNKPPSGQMIDIKKQFAPPTQKSSSALVLRESEKKCEMGKLPDYVYQESLGLGWVTYFSWKFDYINLESHETNKKASMGKKLIQVELKGYGGLHFTREGGFQTKYIKSLSFTIRAAPPISALQVYVGQVGSYTLPTLGWQWTEITIPASKIKSKNDIEYSLSFYNNKNQTNTLWIDNIKWNFTPDCPPTPAFVTDKFI.

A signal peptide spans 1 to 20; the sequence is MRTLKLIILLILSTFKTINS. N-linked (GlcNAc...) asparagine glycosylation is present at asparagine 19. Residues 43-139 form the Expansin-like EG45 domain; sequence GGQCGLPLPG…QKVSCGFSGY (97 aa). Cystine bridges form between cysteine 46/cysteine 70 and cysteine 73/cysteine 134. 2 N-linked (GlcNAc...) asparagine glycosylation sites follow: asparagine 117 and asparagine 391.

This sequence belongs to the expansin family. Expansin A subfamily.

The protein localises to the secreted. In terms of biological role, may serve to lubricate the movement of the cellulose microfibrils during cell growth and wall extension and/or may serve to maintain the fluid state of the slug cell wall. This is Expansin-like protein DDB_G0293186 from Dictyostelium discoideum (Social amoeba).